The primary structure comprises 46 residues: Esculentin-1 (46 aa).

The cysteines at positions 40 and 46 are disulfide-linked.

As to expression, expressed by the skin glands.

The protein localises to the secreted. Its function is as follows. Antimicrobial peptide. Stimulates insulin release by BRIN-BD11 cells in vitro. The protein is Esculentin-1 of Pelophylax saharicus (Sahara frog).